The chain runs to 474 residues: Glycogen synthase (474 aa).

K15 contributes to the ADP-alpha-D-glucose binding site.

It belongs to the glycosyltransferase 1 family. Bacterial/plant glycogen synthase subfamily.

It catalyses the reaction [(1-&gt;4)-alpha-D-glucosyl](n) + ADP-alpha-D-glucose = [(1-&gt;4)-alpha-D-glucosyl](n+1) + ADP + H(+). Its pathway is glycan biosynthesis; glycogen biosynthesis. In terms of biological role, synthesizes alpha-1,4-glucan chains using ADP-glucose. This chain is Glycogen synthase, found in Chlamydia muridarum (strain MoPn / Nigg).